A 768-amino-acid polypeptide reads, in one-letter code: Putative calcium up-regulated protein H (768 aa).

Residues 1 to 22 (MINIEDISKSSNQSEEKQLKST) are disordered. 2 consecutive Ricin B-type lectin domains span residues 25 to 145 (KPKY…WTTF) and 116 to 248 (QGNG…WGIN).

Belongs to the cup family.

The protein resides in the cytoplasm. The protein localises to the membrane. In terms of biological role, may play an important role in stabilizing and/or regulating the cell membrane during Ca(2+) stress or certain stages of development. This Dictyostelium discoideum (Social amoeba) protein is Putative calcium up-regulated protein H (cupH).